Consider the following 334-residue polypeptide: Nucleoid-associated protein YPN_2714 (334 aa).

It belongs to the YejK family.

It localises to the cytoplasm. Its subcellular location is the nucleoid. The sequence is that of Nucleoid-associated protein YPN_2714 from Yersinia pestis bv. Antiqua (strain Nepal516).